Here is a 606-residue protein sequence, read N- to C-terminus: Probable potassium transport system protein Kup 2 (606 aa).

The next 12 helical transmembrane spans lie at 18-38 (GLVF…IMTL), 46-66 (VLGI…VEYA), 97-117 (VAFV…DGII), 140-160 (AQGV…IFQF), 169-189 (AFGP…IVSI), 204-224 (AVTF…EVIL), 247-267 (AWYF…AFIL), 286-306 (ILYI…SQAL), 339-359 (IYIG…MLIF), 368-388 (AYGL…TMIF), 395-415 (WKVP…TANF), and 418-438 (LPHG…IMII).

Belongs to the HAK/KUP transporter (TC 2.A.72) family.

The protein localises to the cell inner membrane. The enzyme catalyses K(+)(in) + H(+)(in) = K(+)(out) + H(+)(out). Transport of potassium into the cell. Likely operates as a K(+):H(+) symporter. The chain is Probable potassium transport system protein Kup 2 from Geobacter metallireducens (strain ATCC 53774 / DSM 7210 / GS-15).